A 506-amino-acid chain; its full sequence is MGEFQGYLELDKFRQHHFLYPLIFQEYIYALAHDHVLNRSILLDNFGYDNKSSSIIVKRLITRMGQQNHLLISANYSNKNKFLGHNKNFDSQMISEGFAVIVEIPFSLRLVSSLERKEIVKSHNLRSIHSIFPFLEDNFLHLNYVSDILIPHPIHLEILVQTLRYWVKDASSLHLLRFFLYEYQSWNSLITPTPKKSISIVSQRNQRLFLFLYNSYVCEYESTFIFLWNQSSHLQSTSYGTLFERIYFYGKIKHLVEVFSNDFPTAPWLFKDPFMHYIRYQGKSILASKGTPLLLNKWKYYLVNFWQCHYYVWSQSGRIHINQLSNHSLDFLGYLSSVRLNPSVVRNQMLENSFIIDNAIKKFDIIVPILPLIRSLAKAKFCNVVGDPISKPSWAESSDSDIIDRFVRICRNISHYHSGASKKKSLYRIKYILRLSCARTLARKHKSTVRAFLKRLGSGLLEEFLTEDEQALSLIFPRASSTLWRLYRGRIWYLDIICINDLVNHE.

Belongs to the intron maturase 2 family. MatK subfamily.

Its subcellular location is the plastid. The protein resides in the chloroplast. Functionally, usually encoded in the trnK tRNA gene intron. Probably assists in splicing its own and other chloroplast group II introns. The polypeptide is Maturase K (Sullivantia sullivantii (Sullivant's coolwort)).